The sequence spans 422 residues: 4-hydroxy-3-methylbut-2-en-1-yl diphosphate synthase (flavodoxin) (422 aa).

Residues Cys316, Cys319, Cys362, and Glu369 each coordinate [4Fe-4S] cluster.

The protein belongs to the IspG family. The cofactor is [4Fe-4S] cluster.

The catalysed reaction is (2E)-4-hydroxy-3-methylbut-2-enyl diphosphate + oxidized [flavodoxin] + H2O + 2 H(+) = 2-C-methyl-D-erythritol 2,4-cyclic diphosphate + reduced [flavodoxin]. It functions in the pathway isoprenoid biosynthesis; isopentenyl diphosphate biosynthesis via DXP pathway; isopentenyl diphosphate from 1-deoxy-D-xylulose 5-phosphate: step 5/6. In terms of biological role, converts 2C-methyl-D-erythritol 2,4-cyclodiphosphate (ME-2,4cPP) into 1-hydroxy-2-methyl-2-(E)-butenyl 4-diphosphate. This chain is 4-hydroxy-3-methylbut-2-en-1-yl diphosphate synthase (flavodoxin), found in Ehrlichia ruminantium (strain Gardel).